We begin with the raw amino-acid sequence, 340 residues long: Ferrochelatase (340 aa).

Positions 189 and 292 each coordinate Fe cation.

It belongs to the ferrochelatase family.

The protein resides in the cytoplasm. It catalyses the reaction heme b + 2 H(+) = protoporphyrin IX + Fe(2+). Its pathway is porphyrin-containing compound metabolism; protoheme biosynthesis; protoheme from protoporphyrin-IX: step 1/1. Functionally, catalyzes the ferrous insertion into protoporphyrin IX. The polypeptide is Ferrochelatase (Pseudomonas fluorescens biotype C).